Consider the following 449-residue polypeptide: Exopolygalacturonase X-2 (449 aa).

The first 24 residues, 1–24, serve as a signal peptide directing secretion; sequence MGFKRTIGLLLGILLALDQVSVLA. 3 N-linked (GlcNAc...) asparagine glycosylation sites follow: Asn136, Asn172, and Asn208. A PbH1 1 repeat occupies 240-261; the sequence is SDNVVIQNSVINHDDDCVSFKP. Asp254 serves as the catalytic Proton donor. Residues Cys256 and Cys273 are joined by a disulfide bond. N-linked (GlcNAc...) asparagine glycosylation is found at Asn262 and Asn274. PbH1 repeat units lie at residues 263 to 283 and 294 to 315; these read STNI…SVGS and VSDL…RLKV. His277 is a catalytic residue. 4 N-linked (GlcNAc...) asparagine glycosylation sites follow: Asn301, Asn306, Asn340, and Asn365. Cysteines 403 and 409 form a disulfide. N-linked (GlcNAc...) asparagine glycans are attached at residues Asn416 and Asn421.

The protein belongs to the glycosyl hydrolase 28 family.

The protein localises to the secreted. It carries out the reaction [(1-&gt;4)-alpha-D-galacturonosyl](n) + H2O = alpha-D-galacturonate + [(1-&gt;4)-alpha-D-galacturonosyl](n-1). Specific in hydrolyzing the terminal glycosidic bond of polygalacturonic acid and oligogalacturonates. This chain is Exopolygalacturonase X-2 (pgaX-2), found in Emericella nidulans (strain FGSC A4 / ATCC 38163 / CBS 112.46 / NRRL 194 / M139) (Aspergillus nidulans).